We begin with the raw amino-acid sequence, 248 residues long: Glycoprotein BILF2 (248 aa).

The N-terminal stretch at 1 to 17 is a signal peptide; the sequence is MTHLVLLLCCCVGSVCA. One can recognise an Ig-like domain in the interval 19-125; it reads FSDLVKFENV…NVTLRNCSVA (107 aa). 12 N-linked (GlcNAc...) asparagine; by host glycosylation sites follow: asparagine 27, asparagine 37, asparagine 45, asparagine 73, asparagine 83, asparagine 92, asparagine 95, asparagine 104, asparagine 116, asparagine 121, asparagine 131, and asparagine 144. A disulfide bond links cysteine 40 and cysteine 115. Residues 167-191 are disordered; sequence VSHTTSTSHRPHRRPVSKRPTHKPV. Positions 175–188 are enriched in basic residues; that stretch reads HRPHRRPVSKRPTH. Residues 210–230 form a helical membrane-spanning segment; the sequence is WALLLITCAVVAPVLLIIIIS.

Belongs to the Epstein-Barr virus BILF2 protein family.

Its subcellular location is the membrane. The sequence is that of Glycoprotein BILF2 from Epstein-Barr virus (strain B95-8) (HHV-4).